The sequence spans 504 residues: L-carnitine/gamma-butyrobetaine antiporter (504 aa).

12 helical membrane passes run 10–30 (IEPK…WLTV), 51–71 (WGWA…WLVF), 92–112 (IFMM…SIEI), 143–163 (GPLP…FFFV), 195–215 (FYLV…TPLV), 231–251 (LDAI…ACGL), 263–283 (SYLS…SFIM), 316–336 (WTVF…IFLA), 347–367 (LCFG…TVLG), 398–418 (WAAL…CFIA), 446–466 (LLVR…LLAL), and 475–495 (AIIA…LSFI).

Belongs to the BCCT transporter (TC 2.A.15) family. CaiT subfamily. Homotrimer.

It localises to the cell inner membrane. The enzyme catalyses 4-(trimethylamino)butanoate(in) + (R)-carnitine(out) = 4-(trimethylamino)butanoate(out) + (R)-carnitine(in). The protein operates within amine and polyamine metabolism; carnitine metabolism. In terms of biological role, catalyzes the exchange of L-carnitine for gamma-butyrobetaine. This is L-carnitine/gamma-butyrobetaine antiporter from Shigella flexneri serotype 5b (strain 8401).